Here is a 76-residue protein sequence, read N- to C-terminus: Acyl carrier protein (76 aa).

A Carrier domain is found at 2–76; sequence SNIEERVIKV…QSAIDFVKSR (75 aa). O-(pantetheine 4'-phosphoryl)serine is present on Ser37.

It belongs to the acyl carrier protein (ACP) family. In terms of processing, 4'-phosphopantetheine is transferred from CoA to a specific serine of apo-ACP by AcpS. This modification is essential for activity because fatty acids are bound in thioester linkage to the sulfhydryl of the prosthetic group.

The protein localises to the cytoplasm. The protein operates within lipid metabolism; fatty acid biosynthesis. Carrier of the growing fatty acid chain in fatty acid biosynthesis. In Dichelobacter nodosus (strain VCS1703A), this protein is Acyl carrier protein.